The following is a 34-amino-acid chain: Toxin GTx1-15 (34 aa).

Intrachain disulfides connect cysteine 2/cysteine 17, cysteine 9/cysteine 23, and cysteine 16/cysteine 30. Phenylalanine 34 is subject to Phenylalanine amide.

The protein belongs to the neurotoxin 10 (Hwtx-1) family. 08 (Gtx1-15) subfamily. In terms of tissue distribution, expressed by the venom gland.

The protein resides in the secreted. Its function is as follows. Potent voltage-gated sodium channel blocker. Potently inhibits the voltage-gated sodium channels Nav1.7/SCN9A (IC(50)=0.58-10 nM). Also shows a moderate activity on Nav1.1/SCN1A (IC(50)=6 nM), Nav1.2/SCN2A (IC(50)=5-128 nM), Nav1.3/SCN3A (IC(50)=20.3-170 nM), and Nav1.6/SCN8A (IC(50)=17-20.1 nM). Shows an unclear inhibition of Nav1.4/SCN4A (IC(50)=200 nM to &gt;10 uM), Nav1.5/SCN5A (IC(50)=140 nM to &gt;10 uM) and Nav1.8/SCN10A (IC(50)=68-12200 nM). Weakly blocks the low voltage-gated calcium channels Cav3.1/CACNA1G (30% inhibition of the peak current at 9.8 nM). shows moderate affinity for lipid bilayers. In vivo, when tested on the OD1-induced mouse model of Nav1.7/SCN9A-mediated pain, the toxin is effective when co-administered with OD1, but lacks efficacy when delivered systemically. In Grammostola porteri (Tarantula spider), this protein is Toxin GTx1-15.